The following is a 1257-amino-acid chain: Neurocan core protein (1257 aa).

The N-terminal stretch at 1 to 22 is a signal peptide; sequence MGAESVWASGLLVLWLLLLVSG. An Ig-like V-type domain is found at 37 to 157; sequence HMLKSGSGPI…EQDLVTLEVT (121 aa). Disulfide bonds link Cys58–Cys139, Cys181–Cys252, Cys205–Cys226, Cys279–Cys354, and Cys303–Cys324. The N-linked (GlcNAc...) asparagine glycan is linked to Asn121. Link domains lie at 159–254 and 258–356; these read VVFH…YCFA and GGEV…YCFR. Asn339 is a glycosylation site (N-linked (GlcNAc...) asparagine). Residues 361–391 form a disordered region; the sequence is TPQRGDSEIPSSGDEGEIVSAEGPPAPELKP. Ser380 and Ser410 each carry an O-linked (Xyl...) (chondroitin sulfate) serine glycan. The span at 447 to 459 shows a compositional bias: low complexity; sequence SSTGVPSPSSLGV. Disordered regions lie at residues 447–493, 550–610, and 683–707; these read SSTG…FQQQ, GSLG…AVPS, and GAED…GSPE. A compositionally biased stretch (polar residues) spans 464 to 473; sequence TTPSGTQVAP. Residues 569 to 580 show a composition bias toward low complexity; it reads SPSTVPSTDSTP. Residue Asn737 is glycosylated (N-linked (GlcNAc...) asparagine). An O-linked (Xyl...) (chondroitin sulfate) serine glycan is attached at Ser944. The EGF-like 1 domain occupies 949–985; that stretch reads PTDPCENNPCLHGGTCRTNGTMYGCSCDQGYAGENCE. Intrachain disulfides connect Cys953–Cys964, Cys958–Cys973, Cys975–Cys984, Cys991–Cys1002, Cys996–Cys1011, Cys1013–Cys1022, Cys1029–Cys1040, Cys1057–Cys1149, Cys1125–Cys1141, Cys1156–Cys1199, and Cys1185–Cys1212. Asn967 is a glycosylation site (N-linked (GlcNAc...) asparagine). Residues 987–1023 form the EGF-like 2; calcium-binding domain; sequence DIDDCLCSPCENGGTCIDEVNGFICLCLPSYGGNLCE. A C-type lectin domain is found at 1025 to 1154; that stretch reads DTEGCDRGWH…LPYVCKKGTV (130 aa). Residues 1154–1214 form the Sushi domain; it reads VLCGPPPAVE…WDRPQIVCTK (61 aa). Asn1164 is a glycosylation site (N-linked (GlcNAc...) asparagine). A compositionally biased stretch (basic residues) spans 1215 to 1244; that stretch reads PRRSHRMRRHHHHPHRHHKPRKEHRKHKRH. The disordered stretch occupies residues 1215–1257; the sequence is PRRSHRMRRHHHHPHRHHKPRKEHRKHKRHPAEDWEKDEGDFC.

It belongs to the aggrecan/versican proteoglycan family. Post-translationally, two isoforms were found that probably arise by proteolytic processing. The large isoform is predominant in early postnatal brain, the small isoform is found in adult brain. In terms of processing, O-glycosylated; contains chondroitin sulfate. Early postnatal and adult brain; not expressed in kidney, lung, liver and muscle.

The protein resides in the secreted. Functionally, may modulate neuronal adhesion and neurite growth during development by binding to neural cell adhesion molecules (NG-CAM and N-CAM). Chondroitin sulfate proteoglycan; binds to hyaluronic acid. This Rattus norvegicus (Rat) protein is Neurocan core protein (Ncan).